The primary structure comprises 81 residues: Small ribosomal subunit protein uS17 (81 aa).

The protein belongs to the universal ribosomal protein uS17 family. Part of the 30S ribosomal subunit.

Functionally, one of the primary rRNA binding proteins, it binds specifically to the 5'-end of 16S ribosomal RNA. This is Small ribosomal subunit protein uS17 from Methylocella silvestris (strain DSM 15510 / CIP 108128 / LMG 27833 / NCIMB 13906 / BL2).